The following is a 662-amino-acid chain: Serine/threonine kinase-like domain-containing protein STKLD1 (662 aa).

Positions 1–202 constitute a Protein kinase domain; that stretch reads MLNPGALGVN…ILDMATCSFL (202 aa). ATP contacts are provided by residues 2-10 and K25; that span reads LNPGALGVN. The interval 639–662 is disordered; it reads LQEDQLEPPAGQEAPLQGEPLFRP.

The protein belongs to the protein kinase superfamily. Ser/Thr protein kinase family. STKL subfamily.

This chain is Serine/threonine kinase-like domain-containing protein STKLD1 (Stkld1), found in Mus musculus (Mouse).